Reading from the N-terminus, the 123-residue chain is DNA-directed RNA polymerase I subunit RPA12 (123 aa).

6 residues coordinate Zn(2+): Cys17, Cys20, Cys35, Cys38, Cys84, and Cys87. The C4-type zinc-finger motif lies at Cys17–Cys38. The segment at Val80 to Lys120 adopts a TFIIS-type zinc-finger fold. A Hairpin motif is present at residues Asp103–Glu104. Zn(2+)-binding residues include Cys112 and Cys115.

Belongs to the archaeal RpoM/eukaryotic RPA12/RPB9/RPC11 RNA polymerase family. Component of the RNA polymerase I (Pol I) complex consisting of 13 subunits: a ten-subunit catalytic core composed of POLR1A/RPA1, POLR1B/RPA2, POLR1C/RPAC1, POLR1D/RPAC2, POLR1H/RPA12, POLR2E/RPABC1, POLR2F/RPABC2, POLR2H/RPABC3, POLR2K/RPABC4 and POLR2L/RPABC5; a mobile stalk subunit POLR1F/RPA43 protruding from the core and additional subunits homologous to general transcription factors POLR1E/RPA49 and POLR1G/RPA34. Part of Pol I pre-initiation complex (PIC), in which Pol I core assembles with RRN3 and promoter-bound UTBF and SL1/TIF-IB complex.

The protein localises to the nucleus. The protein resides in the nucleolus. In terms of biological role, core component of RNA polymerase I (Pol I), a DNA-dependent RNA polymerase which synthesizes ribosomal RNA precursors using the four ribonucleoside triphosphates as substrates. Can mediate Pol I proofreading of the nascent RNA transcript. Anchors into the Pol I active site to monitor transcription fidelity and cleave mis-incorporated 5'-ribonucleotides. The sequence is that of DNA-directed RNA polymerase I subunit RPA12 from Rattus norvegicus (Rat).